The chain runs to 177 residues: Adenine phosphoribosyltransferase (177 aa).

This sequence belongs to the purine/pyrimidine phosphoribosyltransferase family. As to quaternary structure, homodimer.

It localises to the cytoplasm. The enzyme catalyses AMP + diphosphate = 5-phospho-alpha-D-ribose 1-diphosphate + adenine. It functions in the pathway purine metabolism; AMP biosynthesis via salvage pathway; AMP from adenine: step 1/1. In terms of biological role, catalyzes a salvage reaction resulting in the formation of AMP, that is energically less costly than de novo synthesis. The chain is Adenine phosphoribosyltransferase from Cutibacterium acnes (strain DSM 16379 / KPA171202) (Propionibacterium acnes).